We begin with the raw amino-acid sequence, 89 residues long: Transcription elongation factor 1 homolog (89 aa).

The Zn(2+) site is built by C25, C28, C49, and C52.

This sequence belongs to the ELOF1 family.

The protein resides in the nucleus. Its function is as follows. Transcription elongation factor implicated in the maintenance of proper chromatin structure in actively transcribed regions. In Oryza sativa subsp. japonica (Rice), this protein is Transcription elongation factor 1 homolog.